The chain runs to 323 residues: MADLFSTVQEKVAGKDVKIVFPEGLDERILEAVSKLAGNKVLNPIVIGNENEIQAKAKELNLTLGGVKIYDPHTYEGMEDLVQAFVERRKGKATEEQARKALLDENYFGTMLVYKGLADGLVSGAAHSTADTVRPALQIIKTKEGVKKTSGVFIMARGEEQYVFADCAINIAPDSQDLAEIAIESANTAKMFDIEPRVAMLSFSTKGSAKSDETEKVADAVKIAKEKAPELTLDGEFQFDAAFVPSVAEKKAPDSEIKGDANVFVFPSLEAGNIGYKIAQRLGNFEAVGPILQGLNMPVNDLSRGCNAEDVYNLALITAAQAL.

Belongs to the phosphate acetyltransferase and butyryltransferase family.

The protein localises to the cytoplasm. The catalysed reaction is acetyl-CoA + phosphate = acetyl phosphate + CoA. The protein operates within metabolic intermediate biosynthesis; acetyl-CoA biosynthesis; acetyl-CoA from acetate: step 2/2. The sequence is that of Phosphate acetyltransferase (pta) from Bacillus subtilis (strain 168).